The primary structure comprises 126 residues: Actin-depolymerizing factor (126 aa).

The region spanning 1 to 126 (EDNCKLKFLE…SFDIIKSRAL (126 aa)) is the ADF-H domain.

This sequence belongs to the actin-binding proteins ADF family. In terms of tissue distribution, preferentially in mature anther.

Actin-depolymerizing protein. Severs actin filaments (F-actin) and binds to actin monomers. This chain is Actin-depolymerizing factor, found in Brassica napus (Rape).